We begin with the raw amino-acid sequence, 547 residues long: Mercuric reductase (547 aa).

Residues 4–67 (NSYKIPIQGM…NISAAGYQPG (64 aa)) form the HMA domain. Cysteine 15 and cysteine 18 together coordinate a metal cation. FAD-binding residues include alanine 97, glycine 117, and threonine 122. The cysteines at positions 123 and 128 are disulfide-linked. 4 residues coordinate FAD: lysine 132, alanine 196, aspartate 388, and valine 396. Hg(2+) contacts are provided by cysteine 544 and cysteine 545.

The protein belongs to the class-I pyridine nucleotide-disulfide oxidoreductase family. In terms of assembly, homodimer. FAD serves as cofactor.

It carries out the reaction Hg + NADP(+) + H(+) = Hg(2+) + NADPH. Functionally, resistance to Hg(2+) in bacteria appears to be governed by a specialized system which includes mercuric reductase. MerA protein is responsible for volatilizing mercury as Hg(0). The chain is Mercuric reductase (merA) from Staphylococcus aureus.